A 220-amino-acid polypeptide reads, in one-letter code: pH-response regulator palI/RIM9 homolog 1 (220 aa).

The Cytoplasmic portion of the chain corresponds to 1–5 (MSHFK). The chain crosses the membrane as a helical span at residues 6–26 (IVFLTSLSLALVFELFNTISV). Topologically, residues 27–89 (PITSHLFISE…NHAKYALSKL (63 aa)) are extracellular. Residues 90–110 (LLVHVLSFVCVLVFWLFAILI) traverse the membrane as a helical segment. Over 111–121 (CIKWLNTSKSV) the chain is Cytoplasmic. A helical membrane pass occupies residues 122–142 (LLFAVGWSMVTFMVSLLGFLI). The Extracellular portion of the chain corresponds to 143 to 155 (DVLMFASHVTWSS). A helical membrane pass occupies residues 156–176 (WLMLVSAFFVALSGILLCLMI). At 177 to 220 (RDLSYRRFVKLQGEVDVCVPMTEPRDPDELNEIWKKKTSKREIL) the chain is on the cytoplasmic side.

Belongs to the palI/RIM9 family.

Its subcellular location is the cell membrane. Required for the proteolytic cleavage of the transcription factor RIM101 in response to alkaline ambient pH. The chain is pH-response regulator palI/RIM9 homolog 1 from Kluyveromyces lactis (strain ATCC 8585 / CBS 2359 / DSM 70799 / NBRC 1267 / NRRL Y-1140 / WM37) (Yeast).